The chain runs to 956 residues: Glutamyl aminopeptidase (956 aa).

Topologically, residues 1 to 21 (MILEERSSWEGSKRYCIKTKH) are cytoplasmic. The helical; Signal-anchor for type II membrane protein transmembrane segment at 22-42 (VAIICAVVVAVGLIVGLSVGL) threads the bilayer. Over 43–956 (TRSCDSTEGM…IRNWFLDLNG (914 aa)) the chain is Extracellular. The disordered stretch occupies residues 48-87 (STEGMTQGTTQGTTQAPSHLPPVTSPPEDQGVCPASEDES). A compositionally biased stretch (low complexity) spans 49 to 62 (TEGMTQGTTQGTTQ). N-linked (GlcNAc...) asparagine glycosylation is found at asparagine 126 and asparagine 199. Glutamate 225 contributes to the substrate binding site. A glycan (N-linked (GlcNAc...) asparagine) is linked at asparagine 326. 359 to 363 (GAMEN) lines the substrate pocket. Histidine 395 is a Zn(2+) binding site. Glutamate 396 acts as the Proton acceptor in catalysis. Residues histidine 399 and glutamate 418 each contribute to the Zn(2+) site. N-linked (GlcNAc...) asparagine glycosylation is found at asparagine 556, asparagine 569, asparagine 599, asparagine 643, asparagine 647, asparagine 679, asparagine 764, asparagine 797, asparagine 802, and asparagine 829. Arginine 888 lines the substrate pocket.

This sequence belongs to the peptidase M1 family. In terms of assembly, homodimer; disulfide-linked. Zn(2+) serves as cofactor.

Its subcellular location is the cell membrane. It catalyses the reaction Release of N-terminal glutamate (and to a lesser extent aspartate) from a peptide.. With respect to regulation, substrate specificity is modulated by calcium which enhances the enzymatic activity for cleavage of acidic residues while reducing its activity with basic residues. Inhibited by aminopeptidase inhibitors amastatin and bestatin. In terms of biological role, regulates central hypertension through its calcium-modulated preference to cleave N-terminal acidic residues from peptides such as angiotensin II. In Bos taurus (Bovine), this protein is Glutamyl aminopeptidase (ENPEP).